A 109-amino-acid chain; its full sequence is Iron-sulfur cluster assembly protein CyaY (109 aa).

Belongs to the frataxin family.

Functionally, involved in iron-sulfur (Fe-S) cluster assembly. May act as a regulator of Fe-S biogenesis. This Shewanella putrefaciens (strain CN-32 / ATCC BAA-453) protein is Iron-sulfur cluster assembly protein CyaY.